The sequence spans 565 residues: Oxygen-dependent choline dehydrogenase (565 aa).

Residue 6–35 (DYIIVGAGSAGNTLATRLTEDAGVTVLLLE) participates in FAD binding. Residue histidine 475 is the Proton acceptor of the active site.

The protein belongs to the GMC oxidoreductase family. FAD is required as a cofactor.

The catalysed reaction is choline + A = betaine aldehyde + AH2. The enzyme catalyses betaine aldehyde + NAD(+) + H2O = glycine betaine + NADH + 2 H(+). The protein operates within amine and polyamine biosynthesis; betaine biosynthesis via choline pathway; betaine aldehyde from choline (cytochrome c reductase route): step 1/1. Involved in the biosynthesis of the osmoprotectant glycine betaine. Catalyzes the oxidation of choline to betaine aldehyde and betaine aldehyde to glycine betaine at the same rate. The chain is Oxygen-dependent choline dehydrogenase from Pseudomonas putida (strain GB-1).